The primary structure comprises 940 residues: UvrABC system protein A (940 aa).

31 to 38 (GLSGSGKS) serves as a coordination point for ATP. Residues 252-279 (CPHCGYSMQELEPRLFSFNNPAGACGTC) form a C4-type zinc finger. 2 ABC transporter domains span residues 309-586 (WDQK…PDSL) and 606-936 (RDKN…RFLK). 639-646 (GVSGSGKS) contributes to the ATP binding site. Residues 739-765 (CEACQGDGVIKVEMHFLPDVYVPCDVC) form a C4-type zinc finger.

Belongs to the ABC transporter superfamily. UvrA family. In terms of assembly, forms a heterotetramer with UvrB during the search for lesions.

Its subcellular location is the cytoplasm. In terms of biological role, the UvrABC repair system catalyzes the recognition and processing of DNA lesions. UvrA is an ATPase and a DNA-binding protein. A damage recognition complex composed of 2 UvrA and 2 UvrB subunits scans DNA for abnormalities. When the presence of a lesion has been verified by UvrB, the UvrA molecules dissociate. The polypeptide is UvrABC system protein A (Vibrio vulnificus (strain YJ016)).